Reading from the N-terminus, the 291-residue chain is 4-hydroxy-tetrahydrodipicolinate synthase (291 aa).

T47 provides a ligand contact to pyruvate. Residue Y136 is the Proton donor/acceptor of the active site. Residue K164 is the Schiff-base intermediate with substrate of the active site. I206 provides a ligand contact to pyruvate.

Belongs to the DapA family. As to quaternary structure, homotetramer; dimer of dimers.

The protein resides in the cytoplasm. It catalyses the reaction L-aspartate 4-semialdehyde + pyruvate = (2S,4S)-4-hydroxy-2,3,4,5-tetrahydrodipicolinate + H2O + H(+). It participates in amino-acid biosynthesis; L-lysine biosynthesis via DAP pathway; (S)-tetrahydrodipicolinate from L-aspartate: step 3/4. Its function is as follows. Catalyzes the condensation of (S)-aspartate-beta-semialdehyde [(S)-ASA] and pyruvate to 4-hydroxy-tetrahydrodipicolinate (HTPA). The sequence is that of 4-hydroxy-tetrahydrodipicolinate synthase from Leuconostoc citreum (strain KM20).